The following is a 206-amino-acid chain: 3-demethoxyubiquinol 3-hydroxylase (206 aa).

Glu55, Glu85, His88, Glu137, Glu169, and His172 together coordinate Fe cation.

It belongs to the COQ7 family. The cofactor is Fe cation.

Its subcellular location is the cell membrane. It catalyses the reaction a 5-methoxy-2-methyl-3-(all-trans-polyprenyl)benzene-1,4-diol + AH2 + O2 = a 3-demethylubiquinol + A + H2O. It participates in cofactor biosynthesis; ubiquinone biosynthesis. Functionally, catalyzes the hydroxylation of 2-nonaprenyl-3-methyl-6-methoxy-1,4-benzoquinol during ubiquinone biosynthesis. In Laribacter hongkongensis (strain HLHK9), this protein is 3-demethoxyubiquinol 3-hydroxylase.